The sequence spans 319 residues: NADH-quinone oxidoreductase subunit H 1 (319 aa).

8 consecutive transmembrane segments (helical) span residues 8–28 (LFNI…LIWI), 74–94 (LVFI…FAVI), 107–127 (IGLL…VLGG), 147–167 (LSYE…AGTF), 179–199 (MWFC…GIAE), 230–250 (FFVG…TLFF), 258–278 (LPPL…FILL), and 297–317 (LMLP…LALD).

It belongs to the complex I subunit 1 family. In terms of assembly, NDH-1 is composed of 14 different subunits. Subunits NuoA, H, J, K, L, M, N constitute the membrane sector of the complex.

It is found in the cell inner membrane. The enzyme catalyses a quinone + NADH + 5 H(+)(in) = a quinol + NAD(+) + 4 H(+)(out). Functionally, NDH-1 shuttles electrons from NADH, via FMN and iron-sulfur (Fe-S) centers, to quinones in the respiratory chain. The immediate electron acceptor for the enzyme in this species is believed to be ubiquinone. Couples the redox reaction to proton translocation (for every two electrons transferred, four hydrogen ions are translocated across the cytoplasmic membrane), and thus conserves the redox energy in a proton gradient. This subunit may bind ubiquinone. The chain is NADH-quinone oxidoreductase subunit H 1 from Nitrosococcus oceani (strain ATCC 19707 / BCRC 17464 / JCM 30415 / NCIMB 11848 / C-107).